Here is a 124-residue protein sequence, read N- to C-terminus: uncharacterized protein (124 aa).

Positions 62–72 are enriched in basic residues; the sequence is KKNKKQTFLKH. The disordered stretch occupies residues 62-86; the sequence is KKNKKQTFLKHHQSDDHSENKVYKS. A compositionally biased stretch (basic and acidic residues) spans 73–83; the sequence is HQSDDHSENKV. Residues 80–112 adopt a coiled-coil conformation; sequence ENKVYKSKKLEKKIQQLNKKKQLIDTKINFLKE.

This is an uncharacterized protein from Dictyostelium discoideum (Social amoeba).